Reading from the N-terminus, the 340-residue chain is MLSLSKNWNTLIKPNKVAYENFPETNNKAKIVVEPLERGFGLTLGNAMRRVLLSSLQGAAITSIKIPAIEHEFSSIPGVKEDVSEVILNIKGIEVKMHVAEKRIMKLKATGPCVVTAGMIETGHDVEILNPDHVICDLAKDKQLEMELTCKVGKGYVLSTNSYEDNLPIGEIAIDALFNPVKSVTYKVENTRVGQVTDYDKLIMFVETNGDVLPEMAVGLAARILQEQLQLFISFEEQEEDKQVKTDALLFSPYLLKRVDELELSVRSANCLKNDNIIYIGDLVKRTESDMLRTPNFGRKSLNEIKEILAKFNLRFGMDVPDWPPENIQELSKRYEDSYN.

The tract at residues 1–236 (MLSLSKNWNT…EQLQLFISFE (236 aa)) is alpha N-terminal domain (alpha-NTD). An alpha C-terminal domain (alpha-CTD) region spans residues 251–340 (FSPYLLKRVD…LSKRYEDSYN (90 aa)).

It belongs to the RNA polymerase alpha chain family. In terms of assembly, homodimer. The RNAP catalytic core consists of 2 alpha, 1 beta, 1 beta' and 1 omega subunit. When a sigma factor is associated with the core the holoenzyme is formed, which can initiate transcription.

The catalysed reaction is RNA(n) + a ribonucleoside 5'-triphosphate = RNA(n+1) + diphosphate. Functionally, DNA-dependent RNA polymerase catalyzes the transcription of DNA into RNA using the four ribonucleoside triphosphates as substrates. This chain is DNA-directed RNA polymerase subunit alpha, found in Rickettsia africae (strain ESF-5).